Consider the following 644-residue polypeptide: MFQDNPLLAQLKQQLHSQTPRAEGVVKATEKGFGFLEVDAQKSYFIPPPQMKKVMHGDRIIAVIHSEKERESAEPEELVEPFLTRFVGKVQGKNDRLAIVPDHPLLKDAIPCRAARGLNHEFKEGDWAVAEMRCHPLKGDRSFYAELTQYITFGDDHFVPWWVTLARHNLEKEAPDGVATEMLDEGLVREDLTALDFVTIDSASTEDMDDALFAKALPDDKLQLIVAIADPTAWIAEGSKLDKAAKIRAFTNYLPGFNIPMLPRELSDDLCSLRANEVRPVLACRMTLSADGTIEDNIEFFAATIESKAKLVYDQVSDWLENTGDWQPESEAIAEQVRLLAQICQRRGEWRHNHALVFKDRPDYRFILGEKGEVLDIVAEPRRIANRIVEEAMIAANICAARILRDKLGFGIYNVHMGFDPANADALAALLKTHGLHVDAEEVLTLDGFCKLRRELDAQPTGFLDSRIRRFQSFAEISTEPGPHFGLGLEAYATWTSPIRKYGDMINHRLLKAVIKGETATRPQDEITVQMAERRRLNRMAERDVGDWLYARFLKDKAGTDTRFAAEIVDISRGGMRVRLVDNGAIAFIPAPFLHAVRDELVCSQENGTVQIKGETVYKVTDVIDVTIAEVRMETRSIIARPVA.

The region spanning 189 to 516 is the RNB domain; the sequence is REDLTALDFV…NHRLLKAVIK (328 aa). Residues 561 to 643 form the S1 motif domain; that stretch reads DTRFAAEIVD…ETRSIIARPV (83 aa).

It belongs to the RNR ribonuclease family. RNase II subfamily.

The protein resides in the cytoplasm. The enzyme catalyses Exonucleolytic cleavage in the 3'- to 5'-direction to yield nucleoside 5'-phosphates.. In terms of biological role, involved in mRNA degradation. Hydrolyzes single-stranded polyribonucleotides processively in the 3' to 5' direction. The polypeptide is Exoribonuclease 2 (Shigella dysenteriae serotype 1 (strain Sd197)).